The following is a 1045-amino-acid chain: Suppression of tumorigenicity 18 protein (1045 aa).

Disordered stretches follow at residues 38-90 (KKRR…NDHA), 158-228 (KAES…YNRK), and 340-364 (PRVT…RREA). A compositionally biased stretch (basic residues) spans 52-63 (NKRKSLLMKPRH). Composition is skewed to basic and acidic residues over residues 69-90 (GCKE…NDHA) and 159-177 (AESD…NGRD). 6 consecutive CCHHC-type zinc fingers follow at residues 357–400 (PRPE…PLEI), 401–444 (LAMH…KLAM), 713–756 (RDLK…LKSL), 757–800 (MAAN…GIKM), 805–848 (EEKE…QKEN), and 858–901 (KLNK…IKKV). Zn(2+) is bound by residues C366, C371, H384, C390, C410, C415, H428, C434, C722, C727, H740, C746, C766, C771, H784, C790, C814, C819, H832, C838, C867, C872, H885, and C891. Residues 918–987 (IDGDEEIRHL…KELAGLSQAL (70 aa)) are a coiled coil.

It belongs to the MYT1 family.

It localises to the nucleus. Its function is as follows. Repressor that binds to DNA sequences containing a bipartite element consisting of a direct repeat of the sequence 5'-AAAGTTT-3' separated by 2-9 nucleotides. Represses basal transcription activity from target promoters. This Mus musculus (Mouse) protein is Suppression of tumorigenicity 18 protein (St18).